The chain runs to 343 residues: S-adenosylmethionine:tRNA ribosyltransferase-isomerase (343 aa).

Belongs to the QueA family. In terms of assembly, monomer.

The protein resides in the cytoplasm. The catalysed reaction is 7-aminomethyl-7-carbaguanosine(34) in tRNA + S-adenosyl-L-methionine = epoxyqueuosine(34) in tRNA + adenine + L-methionine + 2 H(+). It participates in tRNA modification; tRNA-queuosine biosynthesis. In terms of biological role, transfers and isomerizes the ribose moiety from AdoMet to the 7-aminomethyl group of 7-deazaguanine (preQ1-tRNA) to give epoxyqueuosine (oQ-tRNA). The sequence is that of S-adenosylmethionine:tRNA ribosyltransferase-isomerase from Stenotrophomonas maltophilia (strain R551-3).